We begin with the raw amino-acid sequence, 318 residues long: uncharacterized protein (318 aa).

Residues leucine 67–glutamate 157 are a coiled coil. Positions glutamate 172–leucine 318 are disordered. 2 stretches are compositionally biased toward basic and acidic residues: residues asparagine 175–lysine 193 and lysine 219–serine 236. Over residues valine 237–threonine 248 the composition is skewed to polar residues. Basic and acidic residues-rich tracts occupy residues serine 249–alanine 274 and serine 300–glycine 310.

This is an uncharacterized protein from Staphylococcus aureus (strain Mu50 / ATCC 700699).